The chain runs to 754 residues: 5-methyltetrahydropteroyltriglutamate--homocysteine methyltransferase (754 aa).

5-methyltetrahydropteroyltri-L-glutamate contacts are provided by residues 15–18 (RELK) and K114. Residues 430 to 432 (IGS) and E483 each bind L-homocysteine. L-methionine is bound by residues 430-432 (IGS) and E483. Residues 514 to 515 (RC) and W560 contribute to the 5-methyltetrahydropteroyltri-L-glutamate site. D598 provides a ligand contact to L-homocysteine. Position 598 (D598) interacts with L-methionine. E604 serves as a coordination point for 5-methyltetrahydropteroyltri-L-glutamate. H641, C643, and E665 together coordinate Zn(2+). The active-site Proton donor is the H694. C726 serves as a coordination point for Zn(2+).

It belongs to the vitamin-B12 independent methionine synthase family. Zn(2+) serves as cofactor.

The catalysed reaction is 5-methyltetrahydropteroyltri-L-glutamate + L-homocysteine = tetrahydropteroyltri-L-glutamate + L-methionine. Its pathway is amino-acid biosynthesis; L-methionine biosynthesis via de novo pathway; L-methionine from L-homocysteine (MetE route): step 1/1. Catalyzes the transfer of a methyl group from 5-methyltetrahydrofolate to homocysteine resulting in methionine formation. This is 5-methyltetrahydropteroyltriglutamate--homocysteine methyltransferase from Campylobacter jejuni subsp. jejuni serotype O:23/36 (strain 81-176).